The following is a 332-amino-acid chain: ADP-L-glycero-D-manno-heptose-6-epimerase (332 aa).

NADP(+)-binding positions include 10 to 11 (FI), 31 to 32 (DD), Lys38, 74 to 78 (QGACS), and Asn91. Tyr138 acts as the Proton acceptor in catalysis. Lys142 contributes to the NADP(+) binding site. Asn167 contributes to the substrate binding site. NADP(+) contacts are provided by Val168 and Lys176. The active-site Proton acceptor is Lys176. Substrate is bound by residues Arg178, His185, 199-202 (FSGW), Arg212, and Tyr291.

It belongs to the NAD(P)-dependent epimerase/dehydratase family. HldD subfamily. In terms of assembly, homopentamer. NADP(+) serves as cofactor.

It carries out the reaction ADP-D-glycero-beta-D-manno-heptose = ADP-L-glycero-beta-D-manno-heptose. The protein operates within nucleotide-sugar biosynthesis; ADP-L-glycero-beta-D-manno-heptose biosynthesis; ADP-L-glycero-beta-D-manno-heptose from D-glycero-beta-D-manno-heptose 7-phosphate: step 4/4. Its function is as follows. Catalyzes the interconversion between ADP-D-glycero-beta-D-manno-heptose and ADP-L-glycero-beta-D-manno-heptose via an epimerization at carbon 6 of the heptose. The polypeptide is ADP-L-glycero-D-manno-heptose-6-epimerase (Bordetella avium (strain 197N)).